A 203-amino-acid chain; its full sequence is Non-histone protein 10 (203 aa).

Ser-2 is modified (N-acetylserine). Disordered regions lie at residues 78–97 and 161–203; these read KSKT…PKRP and ISNI…VSSN. Positions 94 to 158 form a DNA-binding region, HMG box; that stretch reads PKRPTNAYLL…RYQMEMEIYN (65 aa).

In terms of assembly, component of the chromatin-remodeling INO80 complex, at least composed of ARP4, ARP5, ARP8, RVB1, RVB2, TAF14, NHP10, IES1, IES3, IES4, IES6, ACT1, IES2, IES5 and INO80.

The protein resides in the nucleus. In terms of biological role, probably involved in transcription regulation via its interaction with the INO80 complex, a chromatin remodeling complex. The sequence is that of Non-histone protein 10 (NHP10) from Saccharomyces cerevisiae (strain ATCC 204508 / S288c) (Baker's yeast).